Reading from the N-terminus, the 352-residue chain is Phosphatidylglycerol--prolipoprotein diacylglyceryl transferase (352 aa).

Helical transmembrane passes span 20–40 (WYGLSYMMGFICAYILITWLA), 55–75 (FITYAAIGTLVGGRLGYVLFY), 97–117 (EGGMASHGGIIGIVIACLLYA), and 122–142 (VNSLYLLDLVAVTGPIGVFFG). Residue arginine 143 coordinates a 1,2-diacyl-sn-glycero-3-phospho-(1'-sn-glycerol). Transmembrane regions (helical) follow at residues 248-268 (SQLFAAFGEGLLIFMFLFFLW), 275-295 (GFIAACFVLIYAVVRVVDEHF), and 314-334 (WLSLAMFVVGLILMVVWTRAA).

It belongs to the Lgt family.

The protein localises to the cell inner membrane. It carries out the reaction L-cysteinyl-[prolipoprotein] + a 1,2-diacyl-sn-glycero-3-phospho-(1'-sn-glycerol) = an S-1,2-diacyl-sn-glyceryl-L-cysteinyl-[prolipoprotein] + sn-glycerol 1-phosphate + H(+). Its pathway is protein modification; lipoprotein biosynthesis (diacylglyceryl transfer). In terms of biological role, catalyzes the transfer of the diacylglyceryl group from phosphatidylglycerol to the sulfhydryl group of the N-terminal cysteine of a prolipoprotein, the first step in the formation of mature lipoproteins. This is Phosphatidylglycerol--prolipoprotein diacylglyceryl transferase from Bdellovibrio bacteriovorus (strain ATCC 15356 / DSM 50701 / NCIMB 9529 / HD100).